The sequence spans 268 residues: Endonuclease 8 1 (268 aa).

Pro-2 (schiff-base intermediate with DNA) is an active-site residue. Glu-3 functions as the Proton donor in the catalytic mechanism. The active-site Proton donor; for beta-elimination activity is the Lys-52. Arg-125 and Asn-166 together coordinate DNA. The FPG-type zinc finger occupies 234–268 (YVYRRAGEPCRVCGGVIRTALLEGRNVFWCPVCQT). Arg-258 serves as the catalytic Proton donor; for delta-elimination activity.

It belongs to the FPG family. Requires Zn(2+) as cofactor.

The catalysed reaction is 2'-deoxyribonucleotide-(2'-deoxyribose 5'-phosphate)-2'-deoxyribonucleotide-DNA = a 3'-end 2'-deoxyribonucleotide-(2,3-dehydro-2,3-deoxyribose 5'-phosphate)-DNA + a 5'-end 5'-phospho-2'-deoxyribonucleoside-DNA + H(+). Functionally, involved in base excision repair of DNA damaged by oxidation or by mutagenic agents. Acts as a DNA glycosylase that recognizes and removes damaged bases. Has AP (apurinic/apyrimidinic) lyase activity and introduces nicks in the DNA strand. Cleaves the DNA backbone by beta-delta elimination to generate a single-strand break at the site of the removed base with both 3'- and 5'-phosphates. This Mycobacterium bovis (strain ATCC BAA-935 / AF2122/97) protein is Endonuclease 8 1 (nei1).